The primary structure comprises 599 residues: MTTQVPPSALLPLNPEQLARLQAATTDLTPTQLAWVSGYFWGVLNQQPAALAATPAPAAEMPGITIISASQTGNARRVAEALRDDLLAAKLNVKLVNAGDYKFKQIASEKLLIVVTSTQGEGEPPEEAVALHKFLFSKKAPKLENTAFAVFSLGDSSYEFFCQSGKDFDSKLAELGGERLLDRVDADVEYQAAASEWRARVVDALKSRAPVAAPSQSVATGTVNEIHTSPYSKDAPLAASLSVNQKITGRNSEKDVRHIEIDLGDSGLRYQPGDALGVWYQNDPALVKELVELLWLKGDEPVTVEGKTLPLNEALQWHFELTVNTANIVENYATLTRSETLLPLVGDKAKLQHYAATTPIVDMVRFSPAQLDAEALINLLRPLTPRLYSIASSQAEVENEVHVTVGVVRYDVEGRARAGGASSFLADRVEEEGEVRVFIEHNDNFRLPTNPETPVIMIGPGTGIAPFRAFMQQRAADEAPGKNWLFFGNPHFTEDFLYQVEWQRYVKEGVLTRIDLAWSRDQKEKIYVQDKLREQGAELWRWINDGAHIYVCGDANRMAKDVEQALLEVIAEFGGMDTEAADEFLSELRVERRYQRDVY.

One can recognise a Flavodoxin-like domain in the interval 64–202; sequence ITIISASQTG…AASEWRARVV (139 aa). FMN-binding positions include 70-75, 117-120, and 153-162; these read SQTGNA, STQG, and LGDSSYEFFC. Positions 234–448 constitute an FAD-binding FR-type domain; the sequence is DAPLAASLSV…IEHNDNFRLP (215 aa). FAD contacts are provided by residues Thr-322, Ala-356, 386 to 389, 404 to 406, Tyr-410, and 419 to 422; these read RLYS, TVG, and GGAS. Residues 519-520, 525-529, and Asp-561 each bind NADP(+); these read SR and KIYVQ. Tyr-599 is an FAD binding site.

The protein belongs to the NADPH-dependent sulphite reductase flavoprotein subunit CysJ family. It in the N-terminal section; belongs to the flavodoxin family. In the C-terminal section; belongs to the flavoprotein pyridine nucleotide cytochrome reductase family. As to quaternary structure, alpha(8)-beta(8). The alpha component is a flavoprotein, the beta component is a hemoprotein. Requires FAD as cofactor. FMN is required as a cofactor.

It carries out the reaction hydrogen sulfide + 3 NADP(+) + 3 H2O = sulfite + 3 NADPH + 4 H(+). The protein operates within sulfur metabolism; hydrogen sulfide biosynthesis; hydrogen sulfide from sulfite (NADPH route): step 1/1. Functionally, component of the sulfite reductase complex that catalyzes the 6-electron reduction of sulfite to sulfide. This is one of several activities required for the biosynthesis of L-cysteine from sulfate. The flavoprotein component catalyzes the electron flow from NADPH -&gt; FAD -&gt; FMN to the hemoprotein component. This is Sulfite reductase [NADPH] flavoprotein alpha-component from Escherichia coli O6:K15:H31 (strain 536 / UPEC).